The sequence spans 135 residues: Hydroxylaminobenzene mutase HabA (135 aa).

The next 4 helical transmembrane spans lie at leucine 5–valine 25, valine 33–tyrosine 55, phenylalanine 67–tryptophan 87, and phenylalanine 113–isoleucine 133.

It is found in the cell membrane. It catalyses the reaction N-phenylhydroxylamine = 2-aminophenol. Functionally, catalyzes the rearrangement of hydroxylaminobenzene to 2-aminophenol. Involved in the degradation of nitrobenzene. The chain is Hydroxylaminobenzene mutase HabA (habA) from Ectopseudomonas oleovorans (Pseudomonas oleovorans).